The primary structure comprises 313 residues: Ribosomal RNA small subunit methyltransferase H (313 aa).

S-adenosyl-L-methionine contacts are provided by residues G36–H38, D56, F80, D102, and Q109.

Belongs to the methyltransferase superfamily. RsmH family.

The protein resides in the cytoplasm. The catalysed reaction is cytidine(1402) in 16S rRNA + S-adenosyl-L-methionine = N(4)-methylcytidine(1402) in 16S rRNA + S-adenosyl-L-homocysteine + H(+). Its function is as follows. Specifically methylates the N4 position of cytidine in position 1402 (C1402) of 16S rRNA. This chain is Ribosomal RNA small subunit methyltransferase H, found in Actinobacillus pleuropneumoniae serotype 7 (strain AP76).